The primary structure comprises 159 residues: Transcription elongation factor GreA (159 aa).

This sequence belongs to the GreA/GreB family.

Functionally, necessary for efficient RNA polymerase transcription elongation past template-encoded arresting sites. The arresting sites in DNA have the property of trapping a certain fraction of elongating RNA polymerases that pass through, resulting in locked ternary complexes. Cleavage of the nascent transcript by cleavage factors such as GreA or GreB allows the resumption of elongation from the new 3'terminus. GreA releases sequences of 2 to 3 nucleotides. This chain is Transcription elongation factor GreA, found in Orientia tsutsugamushi (strain Ikeda) (Rickettsia tsutsugamushi).